The primary structure comprises 1159 residues: ATP-dependent helicase/deoxyribonuclease subunit B (1159 aa).

The UvrD-like helicase ATP-binding domain occupies 1-401 (MSIRFVYGRS…LLKNWSYESV (401 aa)). 8–15 (GRSGTGKS) is an ATP binding site. A UvrD-like helicase C-terminal domain is found at 279–582 (PYRFKGNLEL…NIGDIARIKG (304 aa)). [4Fe-4S] cluster is bound by residues Cys787, Cys1106, Cys1109, and Cys1115.

It belongs to the helicase family. AddB/RexB type 1 subfamily. In terms of assembly, heterodimer of AddA and AddB. The cofactor is Mg(2+). [4Fe-4S] cluster is required as a cofactor.

In terms of biological role, the heterodimer acts as both an ATP-dependent DNA helicase and an ATP-dependent, dual-direction single-stranded exonuclease. Recognizes the chi site generating a DNA molecule suitable for the initiation of homologous recombination. The AddB subunit has 5' -&gt; 3' nuclease activity but not helicase activity. This chain is ATP-dependent helicase/deoxyribonuclease subunit B, found in Clostridium beijerinckii (strain ATCC 51743 / NCIMB 8052) (Clostridium acetobutylicum).